Consider the following 842-residue polypeptide: GPI ethanolamine phosphate transferase 2 (842 aa).

N-linked (GlcNAc...) asparagine glycosylation is present at Asn-186. The helical transmembrane segment at 409–429 (YNYPLLFIGCFLSIVITGTIY) threads the bilayer. Asn-441 is a glycosylation site (N-linked (GlcNAc...) asparagine). The next 2 helical transmembrane spans lie at 442–462 (TSIL…SSFI) and 468–488 (FWWW…NFSS). Asn-506 is a glycosylation site (N-linked (GlcNAc...) asparagine). Residues 524 to 544 (GNIDALWWLNLITVTVVGLNL) traverse the membrane as a helical segment. N-linked (GlcNAc...) asparagine glycosylation occurs at Asn-551. The chain crosses the membrane as a helical span at residues 554 to 574 (VSLLGFSDLLSMGLLSMITFL). An N-linked (GlcNAc...) asparagine glycan is attached at Asn-578. 3 helical membrane-spanning segments follow: residues 615–635 (IHTA…AVLV), 698–718 (YLLA…QSGG), and 740–760 (IYVV…YWSF). Asn-771 carries N-linked (GlcNAc...) asparagine glycosylation. 2 helical membrane-spanning segments follow: residues 783–803 (YPFI…CIIL) and 821–841 (MVWT…LLLL).

It belongs to the PIGG/PIGN/PIGO family. PIGG subfamily.

The protein localises to the endoplasmic reticulum membrane. It participates in glycolipid biosynthesis; glycosylphosphatidylinositol-anchor biosynthesis. In terms of biological role, ethanolamine phosphate transferase involved in glycosylphosphatidylinositol-anchor biosynthesis. Transfers ethanolamine phosphate to the GPI second mannose. The chain is GPI ethanolamine phosphate transferase 2 (LAS21) from Candida glabrata (strain ATCC 2001 / BCRC 20586 / JCM 3761 / NBRC 0622 / NRRL Y-65 / CBS 138) (Yeast).